The following is a 446-amino-acid chain: Signal recognition particle protein (446 aa).

GTP contacts are provided by residues 108-115 (GLQGAGKT), 191-195 (DTAGR), and 249-252 (TKLD).

It belongs to the GTP-binding SRP family. SRP54 subfamily. In terms of assembly, part of the signal recognition particle protein translocation system, which is composed of SRP and FtsY. Interacts with a small cytoplasmic RNA (sc-RNA).

Its subcellular location is the cytoplasm. It catalyses the reaction GTP + H2O = GDP + phosphate + H(+). Functionally, involved in targeting and insertion of nascent membrane proteins into the cytoplasmic membrane. Binds to the hydrophobic signal sequence of the ribosome-nascent chain (RNC) as it emerges from the ribosomes. The SRP-RNC complex is then targeted to the cytoplasmic membrane where it interacts with the SRP receptor FtsY. Interaction with FtsY leads to the transfer of the RNC complex to the Sec translocase for insertion into the membrane, the hydrolysis of GTP by both Ffh and FtsY, and the dissociation of the SRP-FtsY complex into the individual components. The polypeptide is Signal recognition particle protein (Bacillus subtilis (strain 168)).